Reading from the N-terminus, the 194-residue chain is Dephospho-CoA kinase (194 aa).

Residues 3–194 (TIGLTGGIGS…EQVDGFWGGL (192 aa)) enclose the DPCK domain. 11-16 (GSGKST) provides a ligand contact to ATP.

This sequence belongs to the CoaE family.

Its subcellular location is the cytoplasm. It carries out the reaction 3'-dephospho-CoA + ATP = ADP + CoA + H(+). The protein operates within cofactor biosynthesis; coenzyme A biosynthesis; CoA from (R)-pantothenate: step 5/5. Catalyzes the phosphorylation of the 3'-hydroxyl group of dephosphocoenzyme A to form coenzyme A. This is Dephospho-CoA kinase from Corynebacterium jeikeium (strain K411).